Reading from the N-terminus, the 292-residue chain is Elongation factor Ts (292 aa).

Residues 80–83 form an involved in Mg(2+) ion dislocation from EF-Tu region; that stretch reads TDFV.

The protein belongs to the EF-Ts family.

Its subcellular location is the cytoplasm. Functionally, associates with the EF-Tu.GDP complex and induces the exchange of GDP to GTP. It remains bound to the aminoacyl-tRNA.EF-Tu.GTP complex up to the GTP hydrolysis stage on the ribosome. This Ralstonia pickettii (strain 12J) protein is Elongation factor Ts.